The sequence spans 665 residues: DNA ligase (665 aa).

Residues 35-39, 88-89, and Glu117 each bind NAD(+); these read DAIYD and SL. Residue Lys119 is the N6-AMP-lysine intermediate of the active site. Positions 140, 174, 290, and 314 each coordinate NAD(+). Residues Cys406, Cys409, Cys424, and Cys429 each contribute to the Zn(2+) site. In terms of domain architecture, BRCT spans 588 to 665; it reads KKTERFAQLS…EEAFNELLVS (78 aa).

The protein belongs to the NAD-dependent DNA ligase family. LigA subfamily. It depends on Mg(2+) as a cofactor. Mn(2+) is required as a cofactor.

The catalysed reaction is NAD(+) + (deoxyribonucleotide)n-3'-hydroxyl + 5'-phospho-(deoxyribonucleotide)m = (deoxyribonucleotide)n+m + AMP + beta-nicotinamide D-nucleotide.. Functionally, DNA ligase that catalyzes the formation of phosphodiester linkages between 5'-phosphoryl and 3'-hydroxyl groups in double-stranded DNA using NAD as a coenzyme and as the energy source for the reaction. It is essential for DNA replication and repair of damaged DNA. This Metamycoplasma arthritidis (strain 158L3-1) (Mycoplasma arthritidis) protein is DNA ligase.